Consider the following 342-residue polypeptide: Isopentenyl-diphosphate delta-isomerase (342 aa).

Residue 11–12 (RK) coordinates substrate. FMN is bound by residues serine 68, 69–71 (SMT), serine 99, and asparagine 127. 99 to 101 (SMR) serves as a coordination point for substrate. Mg(2+) is bound at residue glutamate 163. FMN contacts are provided by residues lysine 194, threonine 224, and 295 to 296 (AG).

Belongs to the IPP isomerase type 2 family. As to quaternary structure, homooctamer. Dimer of tetramers. Requires FMN as cofactor. The cofactor is NADPH. Mg(2+) is required as a cofactor.

The protein resides in the cytoplasm. The enzyme catalyses isopentenyl diphosphate = dimethylallyl diphosphate. In terms of biological role, involved in the biosynthesis of isoprenoids. Catalyzes the 1,3-allylic rearrangement of the homoallylic substrate isopentenyl (IPP) to its allylic isomer, dimethylallyl diphosphate (DMAPP). This is Isopentenyl-diphosphate delta-isomerase from Rickettsia prowazekii (strain Madrid E).